A 290-amino-acid chain; its full sequence is ATP synthase gamma chain (290 aa).

It belongs to the ATPase gamma chain family. F-type ATPases have 2 components, CF(1) - the catalytic core - and CF(0) - the membrane proton channel. CF(1) has five subunits: alpha(3), beta(3), gamma(1), delta(1), epsilon(1). CF(0) has three main subunits: a, b and c.

It localises to the cell membrane. Produces ATP from ADP in the presence of a proton gradient across the membrane. The gamma chain is believed to be important in regulating ATPase activity and the flow of protons through the CF(0) complex. This is ATP synthase gamma chain from Buchnera aphidicola subsp. Schlechtendalia chinensis.